Here is a 57-residue protein sequence, read N- to C-terminus: Preprotein translocase subunit SecG (57 aa).

The Cytoplasmic segment spans residues 1-33 (MPSSKKKKENVPVMSMAGLIRYYEEEHEKYKVD). Residues 34–55 (PIYVIIASIVLVAVVVAVTKII) form a helical membrane-spanning segment. At 56–57 (PP) the chain is on the extracellular side.

This sequence belongs to the SEC61-beta family. Component of the protein translocase complex. Heterotrimer consisting of alpha (SecY), beta (SecG) and gamma (SecE) subunits. Can form oligomers of the heterotrimer.

The protein resides in the cell membrane. Its function is as follows. Involved in protein export. The function of the beta subunit is unknown, but it may be involved in stabilization of the trimeric complex. This is Preprotein translocase subunit SecG from Metallosphaera sedula (strain ATCC 51363 / DSM 5348 / JCM 9185 / NBRC 15509 / TH2).